A 493-amino-acid polypeptide reads, in one-letter code: Phenmedipham hydrolase (493 aa).

S188 serves as the catalytic Acyl-ester intermediate. Active-site charge relay system residues include E307 and H402.

The protein belongs to the type-B carboxylesterase/lipase family. Monomer.

Functionally, may degrade the phenylcarbamate herbicides phenmedipham and desmedipham cometabolically by hydrolyzing their central carbamate linkages. Conveys resistance to the herbicide phenmedipham. The polypeptide is Phenmedipham hydrolase (pcd) (Pseudarthrobacter oxydans (Arthrobacter oxydans)).